A 477-amino-acid polypeptide reads, in one-letter code: uncharacterized protein (477 aa).

12 helical membrane-spanning segments follow: residues 31–51, 60–80, 103–123, 130–150, 177–197, 205–225, 248–268, 291–311, 334–354, 359–379, 384–404, and 433–453; these read LLRL…LLGT, LGVP…VAPF, LWFG…SLIL, MGPA…AGVG, LLYV…GWLL, LIRV…IALW, AWGL…VMVG, VGQT…GFIW, IVAF…LFFA, IGLG…MVVV, GIAL…AVFI, and VVYV…GPLV.

It belongs to the PucC family.

The protein resides in the cell membrane. This is an uncharacterized protein from Rhodobacter capsulatus (Rhodopseudomonas capsulata).